Reading from the N-terminus, the 243-residue chain is Purine nucleoside phosphorylase YfiH (243 aa).

The Zn(2+) site is built by His-71, Cys-107, and His-124.

This sequence belongs to the purine nucleoside phosphorylase YfiH/LACC1 family. In terms of assembly, homodimer. Requires Cu(2+) as cofactor. The cofactor is Zn(2+).

The catalysed reaction is adenosine + phosphate = alpha-D-ribose 1-phosphate + adenine. The enzyme catalyses S-methyl-5'-thioadenosine + phosphate = 5-(methylsulfanyl)-alpha-D-ribose 1-phosphate + adenine. It carries out the reaction inosine + phosphate = alpha-D-ribose 1-phosphate + hypoxanthine. It catalyses the reaction adenosine + H2O + H(+) = inosine + NH4(+). Purine nucleoside enzyme that catalyzes the phosphorolysis of adenosine and inosine nucleosides, yielding D-ribose 1-phosphate and the respective free bases, adenine and hypoxanthine. Also catalyzes the phosphorolysis of S-methyl-5'-thioadenosine into adenine and S-methyl-5-thio-alpha-D-ribose 1-phosphate. Also has adenosine deaminase activity. May also act as a polyphenol oxidase: able to oxidize syringaldazine and 2,2'-azino-bis(3-ethylbenzthiazoline-6-sulfonic acid) (ABTS) in vitro. This Escherichia coli (strain K12) protein is Purine nucleoside phosphorylase YfiH.